The chain runs to 248 residues: Protein UL24 homolog (248 aa).

The segment at 194–248 (DRPRPTAQGHRPRTHVGPKPSQLTARVPRSARAGRAGGRKGQVGAVGQVCPGAQK) is disordered. Over residues 218-227 (ARVPRSARAG) the composition is skewed to low complexity.

It belongs to the herpesviridae UL24 family.

It localises to the virion. Its subcellular location is the host cytoplasm. The protein localises to the host nucleus. The protein resides in the host nucleolus. It is found in the host Golgi apparatus. Functionally, may participate in nuclear egress of viral particles. Plays a role in the dispersal of several host nucleolar proteins including NCL/nucleolin and NPM1. Since deletion of host NCL/nucleolin negatively impact on nuclear egress, UL24 supposedly acts on this process through its effect on host nucleoli. In Homo sapiens (Human), this protein is Protein UL24 homolog.